Reading from the N-terminus, the 173-residue chain is Alpha-crystallin A chain (173 aa).

Residue Met1 is modified to N-acetylmethionine. Residues 1-63 (MDIAIQHPWF…RTVLDSGISE (63 aa)) form a required for complex formation with BFSP1 and BFSP2 region. Gln6 bears the Deamidated glutamine; partial mark. Ser45 is modified (phosphoserine). A Deamidated glutamine; partial modification is found at Gln50. The 111-residue stretch at 52–162 (LFRTVLDSGI…GHSERAIPVS (111 aa)) folds into the sHSP domain. Position 70 is an N6-acetyllysine (Lys70). Gln90 is modified (deamidated glutamine; partial). Lys99 is modified (N6-acetyllysine). Position 100 (His100) interacts with Zn(2+). Asn101 bears the Deamidated asparagine; partial mark. Zn(2+)-binding residues include Glu102 and His107. Residue Ser122 is modified to Phosphoserine. The residue at position 123 (Asn123) is a Deamidated asparagine; partial. A disordered region spans residues 144 to 173 (PKVPSGVDAGHSERAIPVSREEKPSSAPSS). Residues 153 to 167 (GHSERAIPVSREEKP) are compositionally biased toward basic and acidic residues. His154 serves as a coordination point for Zn(2+). Ser162 is a glycosylation site (O-linked (GlcNAc) serine).

The protein belongs to the small heat shock protein (HSP20) family. In terms of assembly, heteromer composed of three CRYAA and one CRYAB subunits. Inter-subunit bridging via zinc ions enhances stability, which is crucial as there is no protein turn over in the lens. Can also form homodimers and homotetramers (dimers of dimers) which serve as the building blocks of homooligomers. Within homooligomers, the zinc-binding motif is created from residues of 3 different molecules. His-100 and Glu-102 from one molecule are ligands of the zinc ion, and His-107 and His-154 residues from additional molecules complete the site with tetrahedral coordination geometry. Part of a complex required for lens intermediate filament formation composed of BFSP1, BFSP2 and CRYAA. Acetylation at Lys-70 may increase chaperone activity. Post-translationally, undergoes age-dependent proteolytical cleavage at the C-terminus.

Its subcellular location is the cytoplasm. It is found in the nucleus. Its function is as follows. Contributes to the transparency and refractive index of the lens. Acts as a chaperone, preventing aggregation of various proteins under a wide range of stress conditions. Required for the correct formation of lens intermediate filaments as part of a complex composed of BFSP1, BFSP2 and CRYAA. This Pteropus poliocephalus (Grey-headed flying fox) protein is Alpha-crystallin A chain (CRYAA).